A 344-amino-acid polypeptide reads, in one-letter code: Holliday junction branch migration complex subunit RuvB (344 aa).

The interval 1–181 (MERIVTPAEM…FGVLCAMEYY (181 aa)) is large ATPase domain (RuvB-L). Residues L20, R21, G62, K65, T66, T67, 128-130 (EDY), R171, Y181, and R218 each bind ATP. T66 provides a ligand contact to Mg(2+). Residues 182-252 (DETQLKEIVI…EARDALELLE (71 aa)) form a small ATPAse domain (RuvB-S) region. Residues 255–344 (NQGFDKVDNK…SNKGQTSFFK (90 aa)) form a head domain (RuvB-H) region. Residues R310 and R315 each coordinate DNA.

It belongs to the RuvB family. As to quaternary structure, homohexamer. Forms an RuvA(8)-RuvB(12)-Holliday junction (HJ) complex. HJ DNA is sandwiched between 2 RuvA tetramers; dsDNA enters through RuvA and exits via RuvB. An RuvB hexamer assembles on each DNA strand where it exits the tetramer. Each RuvB hexamer is contacted by two RuvA subunits (via domain III) on 2 adjacent RuvB subunits; this complex drives branch migration. In the full resolvosome a probable DNA-RuvA(4)-RuvB(12)-RuvC(2) complex forms which resolves the HJ.

It is found in the cytoplasm. The enzyme catalyses ATP + H2O = ADP + phosphate + H(+). The RuvA-RuvB-RuvC complex processes Holliday junction (HJ) DNA during genetic recombination and DNA repair, while the RuvA-RuvB complex plays an important role in the rescue of blocked DNA replication forks via replication fork reversal (RFR). RuvA specifically binds to HJ cruciform DNA, conferring on it an open structure. The RuvB hexamer acts as an ATP-dependent pump, pulling dsDNA into and through the RuvAB complex. RuvB forms 2 homohexamers on either side of HJ DNA bound by 1 or 2 RuvA tetramers; 4 subunits per hexamer contact DNA at a time. Coordinated motions by a converter formed by DNA-disengaged RuvB subunits stimulates ATP hydrolysis and nucleotide exchange. Immobilization of the converter enables RuvB to convert the ATP-contained energy into a lever motion, pulling 2 nucleotides of DNA out of the RuvA tetramer per ATP hydrolyzed, thus driving DNA branch migration. The RuvB motors rotate together with the DNA substrate, which together with the progressing nucleotide cycle form the mechanistic basis for DNA recombination by continuous HJ branch migration. Branch migration allows RuvC to scan DNA until it finds its consensus sequence, where it cleaves and resolves cruciform DNA. The sequence is that of Holliday junction branch migration complex subunit RuvB from Clostridium botulinum (strain Eklund 17B / Type B).